The sequence spans 349 residues: Acyl-CoA Delta(11) desaturase (349 aa).

2 helical membrane-spanning segments follow: residues 41 to 61 (FLTFSYAHLAALYGLYLCFTS) and 66 to 86 (TLLFSFVLFHMSNIGITAGAH). Residues 86-91 (HRLWTH) carry the Histidine box-1 motif. The Histidine box-2 signature appears at 123–127 (HRLHH). The chain crosses the membrane as a helical span at residues 184–204 (AVPLIGTVCFALPTLIPVYCW). The Histidine box-3 signature appears at 263 to 267 (HNYHH). A helical membrane pass occupies residues 282 to 302 (FLNLTTLFIDFCAWFGWAYDL).

It belongs to the fatty acid desaturase type 1 family. Fe cation is required as a cofactor. In terms of tissue distribution, adult female pheromone gland. Increases by two or three orders of magnitude during the first 2 days after adult eclosion.

Its subcellular location is the endoplasmic reticulum membrane. It carries out the reaction an 11,12-saturated fatty acyl-CoA + 2 Fe(II)-[cytochrome b5] + O2 + 2 H(+) = an (11Z)-Delta(11)-fatty acyl-CoA + 2 Fe(III)-[cytochrome b5] + 2 H2O. In terms of biological role, catalyzes the formation of Delta(11) fatty acyl precursors in the pheromone gland. This chain is Acyl-CoA Delta(11) desaturase (D11DS), found in Trichoplusia ni (Cabbage looper).